Here is a 955-residue protein sequence, read N- to C-terminus: Glycine dehydrogenase (decarboxylating) (955 aa).

The residue at position 705 (Lys-705) is an N6-(pyridoxal phosphate)lysine.

The protein belongs to the GcvP family. As to quaternary structure, the glycine cleavage system is composed of four proteins: P, T, L and H. It depends on pyridoxal 5'-phosphate as a cofactor.

It catalyses the reaction N(6)-[(R)-lipoyl]-L-lysyl-[glycine-cleavage complex H protein] + glycine + H(+) = N(6)-[(R)-S(8)-aminomethyldihydrolipoyl]-L-lysyl-[glycine-cleavage complex H protein] + CO2. In terms of biological role, the glycine cleavage system catalyzes the degradation of glycine. The P protein binds the alpha-amino group of glycine through its pyridoxal phosphate cofactor; CO(2) is released and the remaining methylamine moiety is then transferred to the lipoamide cofactor of the H protein. This chain is Glycine dehydrogenase (decarboxylating), found in Aliivibrio salmonicida (strain LFI1238) (Vibrio salmonicida (strain LFI1238)).